Reading from the N-terminus, the 887-residue chain is Phosphatidylinositol 3-kinase catalytic subunit type 3 (887 aa).

The 150-residue stretch at 35-184 folds into the C2 PI3K-type domain; that stretch reads YKAVLEDPML…LAKLTKAHRQ (150 aa). Residues 149 to 170 are disordered; it reads VEADGSEPTRTPGRTSSTLSED. A compositionally biased stretch (polar residues) spans 156 to 170; it reads PTRTPGRTSSTLSED. Residue Thr-163 is modified to Phosphothreonine; by AMPK. Residue Ser-165 is modified to Phosphoserine; by AMPK. Residues Ser-244, Ser-261, and Ser-282 each carry the phosphoserine modification. The PIK helical domain occupies 283 to 520; that stretch reads DHDLKPNATT…PKTHEMYLNV (238 aa). The disordered stretch occupies residues 415 to 466; it reads LEPTKKDSQTSASESLSNSGVSSGDIDSSQIITNPLPPVASPPPASKAKEVS. Over residues 425-437 the composition is skewed to low complexity; that stretch reads SASESLSNSGVSS. The span at 449–459 shows a compositional bias: pro residues; that stretch reads PLPPVASPPPA. Residues 605–871 enclose the PI3K/PI4K catalytic domain; it reads IPETATLFKS…LIDESVHALF (267 aa). The tract at residues 611–617 is G-loop; that stretch reads LFKSALM. The segment at 740 to 748 is catalytic loop; the sequence is GVGDRHLDN. The interval 759-780 is activation loop; the sequence is HIDFGYILGRDPKPLPPPMKLN.

This sequence belongs to the PI3/PI4-kinase family. In terms of assembly, component of the PI3K (PI3KC3/PI3K-III/class III phosphatidylinositol 3-kinase) complex the core of which is composed of the catalytic subunit PIK3C3, the regulatory subunit PIK3R4 and BECN1 associating with additional regulatory/auxiliary subunits to form alternative complex forms. Alternative complex forms containing a fourth regulatory subunit in a mutually exclusive manner are: the PI3K complex I (PI3KC3-C1) containing ATG14, and the PI3K complex II (PI3KC3-C2) containing UVRAG. PI3KC3-C1 displays a V-shaped architecture with PIK3R4 serving as a bridge between PIK3C3 and the ATG14:BECN1 subcomplex. Both, PI3KC3-C1 and PI3KC3-C2, can associate with further regulatory subunits such as RUBCN, SH3GLB1/Bif-1 and AMBRA1. PI3KC3-C1 probably associates with PIK3CB. Interacts with RAB7A in the presence of PIK3R4. Interacts with AMBRA1. Interacts with BECN1P1/BECN2. Interacts with SLAMF1. May be a component of a complex composed of RAB5A (in GDP-bound form), DYN2 and PIK3C3. Interacts with NCKAP1L. Interacts with ATG14; this interaction is increased in the absence of TMEM39A. Interacts with STEEP1; the interaction is STING1-dependent and required for trafficking of STING1 from the endoplasmic reticulum. Interacts with YWHAG. Interacts with ARMC3. Requires Mn(2+) as cofactor. Post-translationally, ubiquitinated via 'Lys-29'- and 'Lys-48'-linked ubiquitination by UBE3C, promoting its degradation. Deubiquitination by ZRANB1/TRABID promotes its stabilization, leading to autophagosome maturation.

It is found in the midbody. The protein localises to the late endosome. The protein resides in the cytoplasmic vesicle. Its subcellular location is the autophagosome. It carries out the reaction a 1,2-diacyl-sn-glycero-3-phospho-(1D-myo-inositol) + ATP = a 1,2-diacyl-sn-glycero-3-phospho-(1D-myo-inositol-3-phosphate) + ADP + H(+). Its function is as follows. Catalytic subunit of the PI3K complex that mediates formation of phosphatidylinositol 3-phosphate; different complex forms are believed to play a role in multiple membrane trafficking pathways: PI3KC3-C1 is involved in initiation of autophagosomes and PI3KC3-C2 in maturation of autophagosomes and endocytosis. As part of PI3KC3-C1, promotes endoplasmic reticulum membrane curvature formation prior to vesicle budding. Involved in regulation of degradative endocytic trafficking and required for the abscission step in cytokinesis, probably in the context of PI3KC3-C2. Involved in the transport of lysosomal enzyme precursors to lysosomes. Required for transport from early to late endosomes. This is Phosphatidylinositol 3-kinase catalytic subunit type 3 from Mus musculus (Mouse).